A 213-amino-acid chain; its full sequence is Pyridoxine/pyridoxamine 5'-phosphate oxidase (213 aa).

FMN-binding positions include 60–65, 75–76, Lys-82, and Gln-104; these read RMVLMK and YS. Lys-65 serves as a coordination point for substrate. Tyr-122, Arg-126, and Ser-130 together coordinate substrate. FMN is bound by residues 139–140 and Trp-184; that span reads QS. 190 to 192 contacts substrate; the sequence is RLH. Position 194 (Arg-194) interacts with FMN.

The protein belongs to the pyridoxamine 5'-phosphate oxidase family. In terms of assembly, homodimer. FMN serves as cofactor.

The enzyme catalyses pyridoxamine 5'-phosphate + O2 + H2O = pyridoxal 5'-phosphate + H2O2 + NH4(+). It catalyses the reaction pyridoxine 5'-phosphate + O2 = pyridoxal 5'-phosphate + H2O2. It functions in the pathway cofactor metabolism; pyridoxal 5'-phosphate salvage; pyridoxal 5'-phosphate from pyridoxamine 5'-phosphate: step 1/1. The protein operates within cofactor metabolism; pyridoxal 5'-phosphate salvage; pyridoxal 5'-phosphate from pyridoxine 5'-phosphate: step 1/1. Functionally, catalyzes the oxidation of either pyridoxine 5'-phosphate (PNP) or pyridoxamine 5'-phosphate (PMP) into pyridoxal 5'-phosphate (PLP). The chain is Pyridoxine/pyridoxamine 5'-phosphate oxidase from Rhodopseudomonas palustris (strain BisB18).